Reading from the N-terminus, the 700-residue chain is Cap-specific mRNA (nucleoside-2'-O-)-methyltransferase 2 (700 aa).

Positions M1 to R21 are disordered. Positions E109–K321 constitute an Adrift-type SAM-dependent 2'-O-MTase domain. K117 is a catalytic residue. 3 residues coordinate S-adenosyl-L-methionine: G143, W164, and D234. Residue D234 is part of the active site. K274 functions as the Proton acceptor in the catalytic mechanism.

It localises to the nucleus. It catalyses the reaction a 5'-end (N(7)-methyl 5'-triphosphoguanosine)-(2'-O-methyl-ribonucleoside)-(ribonucleotide) in mRNA + S-adenosyl-L-methionine = a 5'-end (N(7)-methyl 5'-triphosphoguanosine)-(2'-O-methyl-ribonucleoside)-(2'-O-methyl-ribonucleotide) in mRNA + S-adenosyl-L-homocysteine + H(+). Probable S-adenosyl-L-methionine-dependent methyltransferase that mediates mRNA cap2 2'-O-ribose methylation to the 5'-cap structure of mRNAs. May methylate the ribose of the second nucleotide of a m(7)GpppG-capped mRNA (cap0) to produce m(7)GpppRmpNm (cap2). Regulates expression of tracheal genes required for pathfinding on the segmental nerve. This Drosophila melanogaster (Fruit fly) protein is Cap-specific mRNA (nucleoside-2'-O-)-methyltransferase 2 (cmtr2).